Consider the following 104-residue polypeptide: Transcription factor S (104 aa).

Residues C4, C7, C20, C22, C65, C68, C93, and C96 each contribute to the Zn(2+) site. The C4-type zinc-finger motif lies at 4-22; that stretch reads CPKCGAVMFPSEGKFKCQC. The TFIIS-type zinc-finger motif lies at 61–101; it reads TRVECPKCGNMEAFWWLQQTRRADESETRFFRCTRCKHTWR.

The protein belongs to the archaeal RpoM/eukaryotic RPA12/RPB9/RPC11 RNA polymerase family.

In terms of biological role, induces RNA cleavage activity in the RNA polymerase. In its presence, the cleavage activity of the RNA polymerase truncates the RNA back to position +15 in a stepwise manner by releasing mainly dinucleotides from the 3'-end of the nascent RNA. The truncated RNAs are able to continue elongation. Involved in transcriptional proofreading and fidelity. Misincorporation of nucleotides during elongation of transcription leads to arrested elongation complexes which are rescued by TFS-promoted removal of a dinucleotide from the 3'-end. TFS is able to induce a cleavage resynthesis cycle in stalled elongation complexes (resulting from the next missing nucleotide or a reduced incorporation rate of a wrong nucleotide) preventing misincorporation and enabling proofreading in a post-incorporation manner. Pausing of elongation complexes is the main determinant of TFS-induced RNA cleavage. In Methanothermobacter thermautotrophicus (strain ATCC 29096 / DSM 1053 / JCM 10044 / NBRC 100330 / Delta H) (Methanobacterium thermoautotrophicum), this protein is Transcription factor S.